A 266-amino-acid chain; its full sequence is rRNA adenine N-6-methyltransferase (266 aa).

The S-adenosyl-L-methionine site is built by His-14, Thr-16, Gly-41, Glu-62, Asp-87, and Asn-103.

The protein belongs to the class I-like SAM-binding methyltransferase superfamily. rRNA adenine N(6)-methyltransferase family.

Involved in erythromycin resistance. In Bacteroides fragilis, this protein is rRNA adenine N-6-methyltransferase (ermFU).